A 454-amino-acid chain; its full sequence is Protein odr-4 homolog (454 aa).

A run of 2 helical transmembrane segments spans residues 82-102 (MLPGGLLVLGVFIITTLELAN) and 432-452 (IGVIAAFTVAVLAAGISFHYF).

The protein belongs to the ODR-4 family. As to expression, ubiquitously expressed.

Its subcellular location is the membrane. Its function is as follows. May play a role in the trafficking of a subset of G-protein coupled receptors. This is Protein odr-4 homolog from Homo sapiens (Human).